The primary structure comprises 982 residues: Glutamate [NMDA] receptor subunit 1 (982 aa).

Residues 1–22 (MRVAFIYRWLLCGAAIVNVLVA) form the signal peptide. The Extracellular segment spans residues 23 to 568 (QRHTASDNPS…TLVSFLQPFS (546 aa)). Asparagine 253, asparagine 309, asparagine 340, asparagine 392, asparagine 449, asparagine 476, and asparagine 496 each carry an N-linked (GlcNAc...) asparagine glycan. Glycine is bound by residues 525–527 (PLT) and arginine 532. A helical transmembrane segment spans residues 569–589 (NTLWILVMVSVHVVALVLYLL). Residues 590 to 646 (DRFSPFGRFKLSHSDSNEEKALNLSSAVWFAWGVLLNSGIGEGTPRSFSARVLGMVW) lie on the Cytoplasmic side of the membrane. Residues 647-667 (AGFAMIIVASYTANLAAFLVL) form a helical membrane-spanning segment. The Extracellular portion of the chain corresponds to 668-826 (ERPKTKLSGI…KTPNTLGLKN (159 aa)). Asparagine 688 carries N-linked (GlcNAc...) asparagine glycosylation. 2 residues coordinate glycine: serine 698 and aspartate 742. The chain crosses the membrane as a helical span at residues 827-847 (MAGVFILVGVGIAGGVGLIII). The Cytoplasmic portion of the chain corresponds to 848-982 (EVIYKKHQVK…YTSDVSHLVV (135 aa)). The interval 948-982 (LTASQLGLGKTRPQQNPLPPRYSPGYTSDVSHLVV) is disordered. The segment covering 972–982 (GYTSDVSHLVV) has biased composition (polar residues).

This sequence belongs to the glutamate-gated ion channel (TC 1.A.10.1) family. As to quaternary structure, forms a heteromeric NMDA channel with Nmdar2.

The protein localises to the cell membrane. The protein resides in the postsynaptic cell membrane. It localises to the postsynaptic density. NMDA receptor subtype of glutamate-gated ion channels with high calcium permeability and voltage-dependent sensitivity to magnesium. Mediated by glycine. This protein plays a key role in synaptic plasticity, synaptogenesis, excitotoxicity, memory acquisition and learning. It mediates neuronal functions in glutamate neurotransmission. Is involved in the cell surface targeting of NMDA receptors. Plays a role in associative learning and in long-term memory consolidation. The chain is Glutamate [NMDA] receptor subunit 1 from Drosophila grimshawi (Hawaiian fruit fly).